A 61-amino-acid chain; its full sequence is Short neurotoxin 1 (61 aa).

4 cysteine pairs are disulfide-bonded: Cys-3–Cys-23, Cys-17–Cys-40, Cys-42–Cys-53, and Cys-54–Cys-59.

The protein belongs to the three-finger toxin family. Short-chain subfamily. Type I alpha-neurotoxin sub-subfamily. Expressed by the venom gland.

The protein resides in the secreted. Binds to muscle nicotinic acetylcholine receptor (nAChR) and inhibit acetylcholine from binding to the receptor, thereby impairing neuromuscular transmission. Functionally, produces peripheral paralysis by blocking neuromuscular transmission at the postsynaptic site. Binds to the muscular nicotinic acetylcholine receptor. This Naja annulifera (Banded Egyptian cobra) protein is Short neurotoxin 1.